A 279-amino-acid chain; its full sequence is Tryptophan 2,3-dioxygenase (279 aa).

Substrate is bound by residues 48–52, tyrosine 110, and arginine 114; that span reads FIVIH. Histidine 237 is a binding site for heme. Residue threonine 251 participates in substrate binding.

Belongs to the tryptophan 2,3-dioxygenase family. Homotetramer. It depends on heme as a cofactor.

It carries out the reaction L-tryptophan + O2 = N-formyl-L-kynurenine. Its pathway is amino-acid degradation; L-tryptophan degradation via kynurenine pathway; L-kynurenine from L-tryptophan: step 1/2. Functionally, heme-dependent dioxygenase that catalyzes the oxidative cleavage of the L-tryptophan (L-Trp) pyrrole ring and converts L-tryptophan to N-formyl-L-kynurenine. Catalyzes the oxidative cleavage of the indole moiety. The sequence is that of Tryptophan 2,3-dioxygenase from Bacillus anthracis.